The following is a 127-amino-acid chain: Protein translocase subunit SecE (127 aa).

3 helical membrane passes run 16–36, 42–62, and 98–118; these read IAKW…NHYY, IFQN…IFLT, and IIVT…LIWF.

This sequence belongs to the SecE/SEC61-gamma family. In terms of assembly, component of the Sec protein translocase complex. Heterotrimer consisting of SecY, SecE and SecG subunits. The heterotrimers can form oligomers, although 1 heterotrimer is thought to be able to translocate proteins. Interacts with the ribosome. Interacts with SecDF, and other proteins may be involved. Interacts with SecA.

Its subcellular location is the cell membrane. Essential subunit of the Sec protein translocation channel SecYEG. Clamps together the 2 halves of SecY. May contact the channel plug during translocation. This is Protein translocase subunit SecE from Buchnera aphidicola subsp. Baizongia pistaciae (strain Bp).